Consider the following 529-residue polypeptide: DNA-binding protein (529 aa).

Residues 1-17 (MASREEEQRETTPERGR) show a composition bias toward basic and acidic residues. 2 disordered regions span residues 1–107 (MASR…IVDS) and 125–166 (PVLI…AESE). Over residues 129–139 (KHGKGGKRTVR) the composition is skewed to basic residues. Residues 155 to 165 (EEEEEPSEAES) are compositionally biased toward acidic residues. Position 195 is a phosphotyrosine; by host (tyrosine 195). Zn(2+)-binding residues include cysteine 284 and histidine 286. The flexible loop stretch occupies residues 297-331 (IEMDVTSENGQRALKEQSSKAKIVKNRWGRNVVQI). Residues cysteine 339, cysteine 355, cysteine 396, cysteine 398, cysteine 450, and cysteine 467 each coordinate Zn(2+). A C-terminal arm, DBP binding region spans residues 513–529 (VSLPVAHSDARQNPFDF).

This sequence belongs to the adenoviridae E2A DNA-binding protein family. Homomultimerizes on viral ssDNA bound to pTP. Forms a initiation complex with viral polymerase, pTP and hosts NFIA and POU2F1/OCT1. Interacts with host SRCAP.

It is found in the host nucleus. Its function is as follows. Plays a role in the elongation phase of viral strand displacement replication by unwinding the template in an ATP-independent fashion, employing its capacity to form multimers. Also enhances the rate of initiation. Released from template upon second strand synthesis. Assembles in complex with viral pTP, viral pol, host NFIA and host POU2F1/OCT1 on viral origin of replication. Covers the whole ssDNA genome during synthesis. The complementary strand synthesis induces its relese from DNA template. May inhibit cellular transcription mediated by the interaction between host SRCAP and CBP. The protein is DNA-binding protein of Human adenovirus C serotype 5 (HAdV-5).